The chain runs to 78 residues: DNA-directed RNA polymerase subunit Rpo5 (78 aa).

The protein belongs to the archaeal Rpo5/eukaryotic RPB5 RNA polymerase subunit family. Part of the RNA polymerase complex.

The protein resides in the cytoplasm. The catalysed reaction is RNA(n) + a ribonucleoside 5'-triphosphate = RNA(n+1) + diphosphate. Its function is as follows. DNA-dependent RNA polymerase (RNAP) catalyzes the transcription of DNA into RNA using the four ribonucleoside triphosphates as substrates. This chain is DNA-directed RNA polymerase subunit Rpo5, found in Methanocaldococcus jannaschii (strain ATCC 43067 / DSM 2661 / JAL-1 / JCM 10045 / NBRC 100440) (Methanococcus jannaschii).